Reading from the N-terminus, the 725-residue chain is IML2-like protein SCY_3392 (725 aa).

Threonine 196 carries the post-translational modification Phosphothreonine. Serine 246, serine 377, and serine 380 each carry phosphoserine.

The protein belongs to the IML2 family.

The protein resides in the cytoplasm. Its subcellular location is the nucleus. Functionally, may be involved in mitochondrial DNA stability. The chain is IML2-like protein SCY_3392 from Saccharomyces cerevisiae (strain YJM789) (Baker's yeast).